The primary structure comprises 3326 residues: Protein unc-80 homolog (3326 aa).

The segment covering 152 to 164 (IENQGSPGQPCRS) has biased composition (polar residues). Disordered regions lie at residues 152–178 (IENQ…RKTF), 243–267 (KRSS…QQGE), 283–317 (PKAT…RASL), and 450–469 (RKED…GKRR). The residue at position 257 (Ser-257) is a Phosphoserine. A compositionally biased stretch (polar residues) spans 283–308 (PKATISGCHQGNSFDGSLSSQTSQER). Ser-526 carries the post-translational modification Phosphoserine. Disordered regions lie at residues 536 to 560 (LSAR…SHGE), 697 to 785 (RKKS…DNIP), 967 to 1076 (GKKV…SRRI), 1405 to 1430 (EDSK…KKVP), and 1469 to 1516 (SSKL…LSNA). Composition is skewed to basic and acidic residues over residues 551 to 560 (LPDHSNSHGE) and 699 to 713 (KSEN…KRPS). The span at 723–737 (SSSSTSGFGAPSASG) shows a compositional bias: low complexity. Residues 738-770 (AGDGGGEEGGGGDGGGGGGGGDGGGGGGGGGGP) show a composition bias toward gly residues. Basic and acidic residues predominate over residues 772–783 (EKNEKNQEKDDN). The span at 1038 to 1055 (SQSAASDTSSQSEQDTSE) shows a compositional bias: low complexity. Residues 1418–1429 (IKSDAGAEEKKV) show a composition bias toward basic and acidic residues. A run of 2 helical transmembrane segments spans residues 2336-2356 (PFVL…DAAN) and 2466-2486 (IAAT…VEVL). Residues 2493–2515 (PQMSRSDQGHKGTTTANHTMSSG) form a disordered region. 2 consecutive transmembrane segments (helical) span residues 2853–2873 (GLAE…LVCF) and 2899–2919 (LALW…FVLL). Over residues 3010 to 3032 (NTGTGTVWEQDSEPSQQASQDTL) the composition is skewed to polar residues. Residues 3010-3052 (NTGTGTVWEQDSEPSQQASQDTLSRTDEEDEENDSVSMPSVVS) are disordered. Ser-3110 is subject to Phosphoserine. Disordered regions lie at residues 3122 to 3222 (LQQP…VLTS), 3236 to 3271 (PKQS…LSDP), and 3296 to 3326 (NGTE…ESHV). A compositionally biased stretch (basic residues) spans 3127–3136 (GRKRGLRQLR). A compositionally biased stretch (polar residues) spans 3157 to 3168 (LSTTRRSIQPKT). The segment covering 3298 to 3309 (TENPLLSSQFTF) has biased composition (polar residues). Acidic residues predominate over residues 3315–3326 (GDTDSALDESHV).

It belongs to the unc-80 family. In terms of assembly, NALCN complex consists of NALCN and auxiliary subunits, UNC79, UNC80 and NACL1. These auxiliary subunits are essential for the NALCN complex function. Interacts (via N-terminus half) with NALCN; this interaction facilitates NALCN surface localization. Interacts (via C-terminus) with UNC79. UNC80 bridges NALCN to UNC79. Post-translationally, phosphorylated on tyrosine residues. As to expression, expressed almost exclusively in the brain. Expressed in hippocampus and ventral tegmental area neurons.

The protein resides in the cell membrane. The protein localises to the cell projection. It is found in the dendrite. In terms of biological role, auxiliary subunit of the NALCN sodium channel complex. The NALCN sodium channel complex is a voltage-gated ion channel responsible for the resting Na(+) permeability that controls neuronal excitability. This complex is activated by neuropeptides substance P, neurotensin. In addition, the channel is inhibited by extracellular Ca(2+) through the Ca(2+)-sensing receptor. UNC80 is essential for NALCN sensitivity to extracellular calcium. The polypeptide is Protein unc-80 homolog (Unc80) (Mus musculus (Mouse)).